A 198-amino-acid chain; its full sequence is Glycerol-3-phosphate acyltransferase (198 aa).

Helical transmembrane passes span 10–30 (LIPILFASYLIGSIPFSWILV), 57–77 (GISFLVLLLDIFKSVLVILIL), 86–106 (IMYLTGFTVVLGHIFPVWFLF), 118–138 (VVLSINIKIFFLFIITWAVVF), and 160–180 (AVTENFNSSIFYIAMSIIVLI).

This sequence belongs to the PlsY family. Probably interacts with PlsX.

It localises to the cell inner membrane. The catalysed reaction is an acyl phosphate + sn-glycerol 3-phosphate = a 1-acyl-sn-glycero-3-phosphate + phosphate. Its pathway is lipid metabolism; phospholipid metabolism. Its function is as follows. Catalyzes the transfer of an acyl group from acyl-phosphate (acyl-PO(4)) to glycerol-3-phosphate (G3P) to form lysophosphatidic acid (LPA). This enzyme utilizes acyl-phosphate as fatty acyl donor, but not acyl-CoA or acyl-ACP. The sequence is that of Glycerol-3-phosphate acyltransferase from Anaplasma marginale (strain Florida).